A 279-amino-acid polypeptide reads, in one-letter code: Large ribosomal subunit protein uL2 (279 aa).

2 disordered regions span residues 1-59 and 224-279; these read MGIR…GGHK and VAMN…KNKR. Residues 50 to 59 are compositionally biased toward basic residues; sequence TTRHKGGGHK. Basic and acidic residues predominate over residues 253 to 268; it reads REGRTRRPNKESDKLI. A compositionally biased stretch (basic residues) spans 269-279; sequence VRRRRTGKNKR.

This sequence belongs to the universal ribosomal protein uL2 family. Part of the 50S ribosomal subunit. Forms a bridge to the 30S subunit in the 70S ribosome.

Functionally, one of the primary rRNA binding proteins. Required for association of the 30S and 50S subunits to form the 70S ribosome, for tRNA binding and peptide bond formation. It has been suggested to have peptidyltransferase activity; this is somewhat controversial. Makes several contacts with the 16S rRNA in the 70S ribosome. The polypeptide is Large ribosomal subunit protein uL2 (Pseudarthrobacter chlorophenolicus (strain ATCC 700700 / DSM 12829 / CIP 107037 / JCM 12360 / KCTC 9906 / NCIMB 13794 / A6) (Arthrobacter chlorophenolicus)).